A 391-amino-acid polypeptide reads, in one-letter code: MRNWLLPEYIEDVLPRDAYRIEKIRRLIMDMLFAHGYQFVMPPLLEYVESLLAGSGSGMNLRMFKVVDQLSGRMMGLRADMTPQAARIDAHLLNISGVTRLCYASSVVHTVPDEITRTREPFQVGAELYGHSGIESDLEIQCLLLECLSVSGIHSIHLDLGHIRVFRSLIRDSGIKPEFEMELYAALWAKDISSLKELVRTGLNKRLTRSVQNALLLLPELYGDGTVLLSARQHLPDFPEIGEALDQLEHVARILQPYVDRITFDLADLRGYHYHTGMVFAVYTPGCPAPIALGGRYDEIGKSFGRARPATGFSLDLKQLSQLTDMNGYPSGILAPWKPEDEKLAAMVRQLRAEGHIVVTELPGEENQEVTGCDRKLVFRNGNWEIDPVTG.

Belongs to the class-II aminoacyl-tRNA synthetase family. HisZ subfamily. In terms of assembly, heteromultimer composed of HisG and HisZ subunits.

The protein localises to the cytoplasm. The protein operates within amino-acid biosynthesis; L-histidine biosynthesis; L-histidine from 5-phospho-alpha-D-ribose 1-diphosphate: step 1/9. Required for the first step of histidine biosynthesis. May allow the feedback regulation of ATP phosphoribosyltransferase activity by histidine. The chain is ATP phosphoribosyltransferase regulatory subunit from Nitrosomonas europaea (strain ATCC 19718 / CIP 103999 / KCTC 2705 / NBRC 14298).